We begin with the raw amino-acid sequence, 276 residues long: Monoglyceride lipase homolog (276 aa).

The protein belongs to the orthopoxvirus OPG043 family.

This Cynomys gunnisoni (Gunnison's prairie dog) protein is Monoglyceride lipase homolog (OPG043).